Here is a 267-residue protein sequence, read N- to C-terminus: 5'-nucleotidase SurE (267 aa).

Positions 14, 15, 45, and 100 each coordinate a divalent metal cation.

The protein belongs to the SurE nucleotidase family. A divalent metal cation serves as cofactor.

It is found in the cytoplasm. It catalyses the reaction a ribonucleoside 5'-phosphate + H2O = a ribonucleoside + phosphate. Nucleotidase that shows phosphatase activity on nucleoside 5'-monophosphates. The chain is 5'-nucleotidase SurE from Methanosarcina mazei (strain ATCC BAA-159 / DSM 3647 / Goe1 / Go1 / JCM 11833 / OCM 88) (Methanosarcina frisia).